Reading from the N-terminus, the 118-residue chain is Acidic phospholipase A2 (118 aa).

Ca(2+) contacts are provided by Tyr-25, Gly-27, and Gly-29. Residue His-45 is part of the active site. Asp-46 lines the Ca(2+) pocket. Asp-86 is an active-site residue.

The protein belongs to the phospholipase A2 family. Group II subfamily. D49 sub-subfamily. Ca(2+) serves as cofactor. In terms of processing, six disulfide bonds are present. Expressed by the venom gland.

The protein resides in the secreted. It carries out the reaction a 1,2-diacyl-sn-glycero-3-phosphocholine + H2O = a 1-acyl-sn-glycero-3-phosphocholine + a fatty acid + H(+). PLA2 catalyzes the calcium-dependent hydrolysis of the 2-acyl groups in 3-sn-phosphoglycerides. This chain is Acidic phospholipase A2, found in Bitis gabonica (Gaboon adder).